A 425-amino-acid polypeptide reads, in one-letter code: 3-phosphoshikimate 1-carboxyvinyltransferase (425 aa).

3 residues coordinate 3-phosphoshikimate: Lys21, Ser22, and Arg26. Lys21 is a phosphoenolpyruvate binding site. Gly91 and Arg119 together coordinate phosphoenolpyruvate. Residues Ser164, Gln166, Asp311, and Lys338 each coordinate 3-phosphoshikimate. Phosphoenolpyruvate is bound at residue Gln166. The Proton acceptor role is filled by Asp311. Positions 342 and 383 each coordinate phosphoenolpyruvate.

The protein belongs to the EPSP synthase family. As to quaternary structure, monomer.

It is found in the cytoplasm. It catalyses the reaction 3-phosphoshikimate + phosphoenolpyruvate = 5-O-(1-carboxyvinyl)-3-phosphoshikimate + phosphate. The protein operates within metabolic intermediate biosynthesis; chorismate biosynthesis; chorismate from D-erythrose 4-phosphate and phosphoenolpyruvate: step 6/7. Functionally, catalyzes the transfer of the enolpyruvyl moiety of phosphoenolpyruvate (PEP) to the 5-hydroxyl of shikimate-3-phosphate (S3P) to produce enolpyruvyl shikimate-3-phosphate and inorganic phosphate. The protein is 3-phosphoshikimate 1-carboxyvinyltransferase of Campylobacter fetus subsp. fetus (strain 82-40).